The following is a 211-amino-acid chain: Protein N-terminal glutamine amidohydrolase (211 aa).

Catalysis depends on residues cysteine 24, histidine 78, and aspartate 94.

Belongs to the NTAQ1 family. As to quaternary structure, monomer.

It carries out the reaction N-terminal L-glutaminyl-[protein] + H2O = N-terminal L-glutamyl-[protein] + NH4(+). Mediates the side-chain deamidation of N-terminal glutamine residues to glutamate, an important step in N-end rule pathway of protein degradation. Conversion of the resulting N-terminal glutamine to glutamate renders the protein susceptible to arginylation, polyubiquitination and degradation as specified by the N-end rule. Does not act on substrates with internal or C-terminal glutamine and does not act on non-glutamine residues in any position. This Anopheles gambiae (African malaria mosquito) protein is Protein N-terminal glutamine amidohydrolase (tun).